The primary structure comprises 171 residues: Group 1 truncated hemoglobin LI410 (171 aa).

The N-terminal 23 residues, 1 to 23 (MMRTVQLRTLRPCIRAQQQPVRA), are a transit peptide targeting the chloroplast. The heme site is built by Tyr-63 and His-111.

Belongs to the truncated hemoglobin family. Group I subfamily. Heme is required as a cofactor.

Its subcellular location is the plastid. The protein localises to the chloroplast. This is Group 1 truncated hemoglobin LI410 (LI410) from Chlamydomonas moewusii (Chlamydomonas eugametos).